Reading from the N-terminus, the 650-residue chain is Fructose-1,6-bisphosphatase class 3 (650 aa).

This sequence belongs to the FBPase class 3 family. It depends on Mn(2+) as a cofactor.

The enzyme catalyses beta-D-fructose 1,6-bisphosphate + H2O = beta-D-fructose 6-phosphate + phosphate. Its pathway is carbohydrate biosynthesis; gluconeogenesis. In Finegoldia magna (strain ATCC 29328 / DSM 20472 / WAL 2508) (Peptostreptococcus magnus), this protein is Fructose-1,6-bisphosphatase class 3.